Consider the following 405-residue polypeptide: Argininosuccinate synthase (405 aa).

ATP-binding positions include 10–18 (AYSGGLDTS) and Ala37. Residues Tyr88 and Ser93 each contribute to the L-citrulline site. Position 118 (Gly118) interacts with ATP. Residues Thr120, Asn124, and Asp125 each contribute to the L-aspartate site. Asn124 is a binding site for L-citrulline. Residues Arg128, Ser179, Ser188, Glu264, and Tyr276 each coordinate L-citrulline.

Belongs to the argininosuccinate synthase family. Type 1 subfamily. In terms of assembly, homotetramer.

The protein localises to the cytoplasm. It carries out the reaction L-citrulline + L-aspartate + ATP = 2-(N(omega)-L-arginino)succinate + AMP + diphosphate + H(+). The protein operates within amino-acid biosynthesis; L-arginine biosynthesis; L-arginine from L-ornithine and carbamoyl phosphate: step 2/3. In Ectopseudomonas mendocina (strain ymp) (Pseudomonas mendocina), this protein is Argininosuccinate synthase.